Reading from the N-terminus, the 302-residue chain is Pentatricopeptide repeat-containing protein At4g38150 (302 aa).

The segment covering 26–40 has biased composition (polar residues); the sequence is SATRFLSTGDNGQVD. Disordered stretches follow at residues 26–82 and 94–116; these read SATR…TTLS and VNQD…PPPE. The segment covering 54–67 has biased composition (basic and acidic residues); that stretch reads LRGERSSNSHREPP. 4 PPR repeats span residues 130–164, 165–199, 200–234, and 235–269; these read LIPN…GTIP, EVVI…GIAP, NAFS…GHSP, and NVPT…GFAV.

It belongs to the PPR family. P subfamily.

The protein is Pentatricopeptide repeat-containing protein At4g38150 of Arabidopsis thaliana (Mouse-ear cress).